Reading from the N-terminus, the 247-residue chain is NAD(P)H-quinone oxidoreductase subunit K, chloroplastic (247 aa).

[4Fe-4S] cluster contacts are provided by Cys61, Cys62, Cys126, and Cys157.

It belongs to the complex I 20 kDa subunit family. In terms of assembly, NDH is composed of at least 16 different subunits, 5 of which are encoded in the nucleus. Requires [4Fe-4S] cluster as cofactor.

Its subcellular location is the plastid. It localises to the chloroplast thylakoid membrane. The enzyme catalyses a plastoquinone + NADH + (n+1) H(+)(in) = a plastoquinol + NAD(+) + n H(+)(out). It catalyses the reaction a plastoquinone + NADPH + (n+1) H(+)(in) = a plastoquinol + NADP(+) + n H(+)(out). Functionally, NDH shuttles electrons from NAD(P)H:plastoquinone, via FMN and iron-sulfur (Fe-S) centers, to quinones in the photosynthetic chain and possibly in a chloroplast respiratory chain. The immediate electron acceptor for the enzyme in this species is believed to be plastoquinone. Couples the redox reaction to proton translocation, and thus conserves the redox energy in a proton gradient. The polypeptide is NAD(P)H-quinone oxidoreductase subunit K, chloroplastic (Anthoceros angustus (Hornwort)).